Here is a 208-residue protein sequence, read N- to C-terminus: Putative proteasome subunit alpha type-4-B (208 aa).

The protein belongs to the peptidase T1A family. As to quaternary structure, component of the 20S core complex of the 26S proteasome. The 26S proteasome is composed of a core protease (CP), known as the 20S proteasome, capped at one or both ends by the 19S regulatory particle (RP/PA700). The 20S proteasome core is composed of 28 subunits that are arranged in four stacked rings, resulting in a barrel-shaped structure. The two end rings are each formed by seven alpha subunits, and the two central rings are each formed by seven beta subunits. The catalytic chamber with the active sites is on the inside of the barrel.

It localises to the cytoplasm. The protein localises to the nucleus. Functionally, the proteasome is a multicatalytic proteinase complex which is characterized by its ability to cleave peptides with Arg, Phe, Tyr, Leu, and Glu adjacent to the leaving group at neutral or slightly basic pH. The proteasome has an ATP-dependent proteolytic activity. The protein is Putative proteasome subunit alpha type-4-B (PAC2) of Arabidopsis thaliana (Mouse-ear cress).